The sequence spans 425 residues: Enolase (425 aa).

(2R)-2-phosphoglycerate is bound at residue glutamine 162. Residue glutamate 204 is the Proton donor of the active site. Residues aspartate 241, glutamate 282, and aspartate 309 each contribute to the Mg(2+) site. The (2R)-2-phosphoglycerate site is built by lysine 334, arginine 363, serine 364, and lysine 385. The active-site Proton acceptor is the lysine 334.

It belongs to the enolase family. Mg(2+) is required as a cofactor.

It localises to the cytoplasm. Its subcellular location is the secreted. The protein resides in the cell surface. It catalyses the reaction (2R)-2-phosphoglycerate = phosphoenolpyruvate + H2O. Its pathway is carbohydrate degradation; glycolysis; pyruvate from D-glyceraldehyde 3-phosphate: step 4/5. In terms of biological role, catalyzes the reversible conversion of 2-phosphoglycerate (2-PG) into phosphoenolpyruvate (PEP). It is essential for the degradation of carbohydrates via glycolysis. The polypeptide is Enolase (Corynebacterium aurimucosum (strain ATCC 700975 / DSM 44827 / CIP 107346 / CN-1) (Corynebacterium nigricans)).